A 71-amino-acid polypeptide reads, in one-letter code: MFTLKKSLLLLFFLGTINLSLCEQERNADEEERRDDSDKRDVEVEKRFLSTLLNVASKVVPTLFCKITKKC.

A signal peptide spans 1–22; sequence MFTLKKSLLLLFFLGTINLSLC. The propeptide at 23-45 is removed in mature form; sequence EQERNADEEERRDDSDKRDVEVE. Cysteines 65 and 71 form a disulfide.

This sequence belongs to the frog skin active peptide (FSAP) family. Brevinin subfamily. As to expression, expressed by the skin glands.

It is found in the secreted. Antimicrobial peptide active against a variety of Gram-positive and some Gram-negative bacterial strains. Has antifungal activity against C.albicans ATCC 10231 and a slime mold isolate. Has hemolytic activity against human erythrocytes. The chain is Brevinin-1CG4 from Amolops chunganensis (Chungan torrent frog).